Consider the following 317-residue polypeptide: SURF1-like protein (317 aa).

A run of 2 helical transmembrane segments spans residues 78 to 98 (GSIL…WQIY) and 293 to 313 (HMNY…MWIH).

It belongs to the SURF1 family.

It localises to the mitochondrion inner membrane. Its function is as follows. Probably involved in the biogenesis of the COX complex. This Caenorhabditis briggsae protein is SURF1-like protein (sft-1).